Here is a 517-residue protein sequence, read N- to C-terminus: L-amino-acid oxidase (517 aa).

The first 19 residues, 1-19 (MNVFSIFSLVFLAAFGSCA), serve as a signal peptide directing secretion. Cys-29 and Cys-192 are disulfide-bonded. FAD contacts are provided by residues 62–63 (MA), 82–83 (EA), Arg-90, and 106–109 (GPMR). Arg-109 serves as a coordination point for substrate. Asn-191 carries an N-linked (GlcNAc...) asparagine glycan. FAD is bound at residue Val-280. Cys-350 and Cys-431 are oxidised to a cystine. Residue Asn-380 is glycosylated (N-linked (GlcNAc...) asparagine). Tyr-391 is a substrate binding site. FAD-binding positions include Glu-476 and 483–488 (GWLDST). 483-484 (GW) serves as a coordination point for substrate.

The protein belongs to the flavin monoamine oxidase family. FIG1 subfamily. In terms of assembly, monomer. This is in contrast with most of its orthologs, that are non-covalently linked homodimers. FAD serves as cofactor. In terms of processing, N-glycosylated. In terms of tissue distribution, expressed by the venom gland.

The protein localises to the secreted. It carries out the reaction an L-alpha-amino acid + O2 + H2O = a 2-oxocarboxylate + H2O2 + NH4(+). The catalysed reaction is L-leucine + O2 + H2O = 4-methyl-2-oxopentanoate + H2O2 + NH4(+). The enzyme catalyses L-phenylalanine + O2 + H2O = 3-phenylpyruvate + H2O2 + NH4(+). It catalyses the reaction L-tryptophan + O2 + H2O = indole-3-pyruvate + H2O2 + NH4(+). It carries out the reaction L-methionine + O2 + H2O = 4-methylsulfanyl-2-oxobutanoate + H2O2 + NH4(+). The catalysed reaction is L-isoleucine + O2 + H2O = (S)-3-methyl-2-oxopentanoate + H2O2 + NH4(+). The enzyme catalyses L-arginine + O2 + H2O = 5-guanidino-2-oxopentanoate + H2O2 + NH4(+). It catalyses the reaction L-aspartate + O2 + H2O = oxaloacetate + H2O2 + NH4(+). It carries out the reaction L-histidine + O2 + H2O = 3-(imidazol-5-yl)pyruvate + H2O2 + NH4(+). The catalysed reaction is L-asparagine + O2 + H2O = 2-oxosuccinamate + H2O2 + NH4(+). The enzyme catalyses L-tyrosine + O2 + H2O = 3-(4-hydroxyphenyl)pyruvate + H2O2 + NH4(+). It catalyses the reaction L-glutamine + O2 + H2O = 2-oxoglutaramate + H2O2 + NH4(+). It carries out the reaction L-alanine + O2 + H2O = pyruvate + H2O2 + NH4(+). The catalysed reaction is L-lysine + O2 + H2O = 6-amino-2-oxohexanoate + H2O2 + NH4(+). The enzyme catalyses L-glutamate + O2 + H2O = H2O2 + 2-oxoglutarate + NH4(+). Functionally, catalyzes an oxidative deamination of predominantly hydrophobic and aromatic L-amino acids, thus producing hydrogen peroxide that may contribute to the diverse toxic effects of this enzyme. Is highly active against L-Tyr, L-Asp, L-Phe, L-Glu, L-Trp, L-His, L-Gln, L-Ile, L-Met, L-Leu and moderately active against L-Lys, L-Arg, L-Ala and L-Asn. Exhibits diverse biological activities, such as edema, inflammatory cell infiltration, cytotoxicity and apoptosis, as well as induction of platelet aggregation. Effects of snake L-amino oxidases on platelets are controversial, since they either induce aggregation or inhibit agonist-induced aggregation. These different effects are probably due to different experimental conditions. This protein may also induce hemorrhage, hemolysis, and have antibacterial and antiparasitic activities. The chain is L-amino-acid oxidase from Bungarus fasciatus (Banded krait).